Reading from the N-terminus, the 235-residue chain is Ferric nitrobindin-like protein (235 aa).

The disordered stretch occupies residues 1 to 59 (MSDLASEGSDPAERASEHSNGNAPADRPARRSGDQAVADAAERAKATGSRNIPVLPDLP). The short motif at 85–91 (GVWRGEG) is the GXWXGXG element.

This sequence belongs to the nitrobindin family.

In Nocardia farcinica (strain IFM 10152), this protein is Ferric nitrobindin-like protein.